Consider the following 2879-residue polypeptide: Peramine synthetase ppzA (2879 aa).

Residues 1–12 show a composition bias toward basic and acidic residues; sequence MTYDEGGHRNNE. The interval 1-52 is disordered; the sequence is MTYDEGGHRNNEETPQDVNMSSNNEGMSTSSPTGSYGEIIGQATVSVPQEDQ. A compositionally biased stretch (polar residues) spans 16–34; that stretch reads QDVNMSSNNEGMSTSSPTG. The segment at 351–747 is adenylation 1; the sequence is QEQCRLQPNT…VGRKDTQVKI (397 aa). In terms of domain architecture, Carrier 1 spans 882-958; sequence QPLSDMERLL…DLSRQSKYIE (77 aa). O-(pantetheine 4'-phosphoryl)serine is present on Ser919. Residues 997–1410 form a condensation region; sequence DAYPCTPLQE…ITILTTEDLE (414 aa). The adenylation 2 stretch occupies residues 1433 to 1827; sequence DKVQHRPNAP…LSFVRRKDTT (395 aa). The tract at residues 1958-2050 is methylation (Met) domain; that stretch reads LEIGCGSGMM…KYLVKLIQDI (93 aa). Positions 2370–2448 constitute a Carrier 2 domain; it reads WPTTDTGKEL…RLLLDCCCDD (79 aa). Position 2407 is an O-(pantetheine 4'-phosphoryl)serine (Ser2407). Residues 2500-2817 form a thiesterase (TE) domain region; that stretch reads TVLLTGANGF…LEDMLQDLDD (318 aa).

This sequence belongs to the NRP synthetase family. The cofactor is pantetheine 4'-phosphate.

The catalysed reaction is (S)-1-pyrroline-5-carboxylate + L-arginine + S-adenosyl-L-methionine + 2 ATP = peramine + 2 AMP + S-adenosyl-L-homocysteine + 2 diphosphate + H2O + 2 H(+). The protein operates within secondary metabolite biosynthesis. Functionally, nonribosomal peptide synthetase; part of the gene cluster that mediates the biosynthesis of pyrrolopyrazines, secondary metabolites showing insecticidal activity. The single multifunctional NRPS ppzA is responsible for the biosynthesis of peramine. The condensation domain of ppzA is proposed to catalyze formation of a peptide bond between 1-pyrroline-5-carboxylate and arginine. The methylation domain of ppzA would catalyze the N-methylation of the alpha-amino group of arginine. The reductase domain is proposed to be responsible for reduction of the thioester and the cyclization to form an iminium ion resulting in release from the peptide synthetase. Deprotonation of this intermediate and oxidation of the pyrroline ring would give rise to peramine. This final oxidation to give the pyrrole functionality may be spontaneous. In Epichloe species that produce only peramine, the peramine synthetase gene is not localized in a gene cluster, in contrast to Metarhizium species that contain additional pyrrolopyrazine biosynthesis genes. The 2-oxoglutarate-Fe(II) type oxidoreductase ppzC hydroxylates peramine to yield the newly identified compound 8-hydroxyperamine whereas ppzD converts L-proline into trans-4-hydroxy-L-proline, a precursor of peramine biosynthesis. The protein is Peramine synthetase ppzA of Metarhizium rileyi (strain RCEF 4871) (Nomuraea rileyi).